Here is a 613-residue protein sequence, read N- to C-terminus: Dihydroxy-acid dehydratase (613 aa).

Mg(2+) is bound at residue Asp81. A [2Fe-2S] cluster-binding site is contributed by Cys122. Mg(2+) contacts are provided by Asp123 and Lys124. The residue at position 124 (Lys124) is an N6-carboxylysine. Position 195 (Cys195) interacts with [2Fe-2S] cluster. Residue Glu491 coordinates Mg(2+). Ser517 functions as the Proton acceptor in the catalytic mechanism.

It belongs to the IlvD/Edd family. In terms of assembly, homodimer. The cofactor is [2Fe-2S] cluster. It depends on Mg(2+) as a cofactor.

It catalyses the reaction (2R)-2,3-dihydroxy-3-methylbutanoate = 3-methyl-2-oxobutanoate + H2O. The enzyme catalyses (2R,3R)-2,3-dihydroxy-3-methylpentanoate = (S)-3-methyl-2-oxopentanoate + H2O. It participates in amino-acid biosynthesis; L-isoleucine biosynthesis; L-isoleucine from 2-oxobutanoate: step 3/4. Its pathway is amino-acid biosynthesis; L-valine biosynthesis; L-valine from pyruvate: step 3/4. Functionally, functions in the biosynthesis of branched-chain amino acids. Catalyzes the dehydration of (2R,3R)-2,3-dihydroxy-3-methylpentanoate (2,3-dihydroxy-3-methylvalerate) into 2-oxo-3-methylpentanoate (2-oxo-3-methylvalerate) and of (2R)-2,3-dihydroxy-3-methylbutanoate (2,3-dihydroxyisovalerate) into 2-oxo-3-methylbutanoate (2-oxoisovalerate), the penultimate precursor to L-isoleucine and L-valine, respectively. The chain is Dihydroxy-acid dehydratase from Vibrio vulnificus (strain YJ016).